The chain runs to 292 residues: Oxidative stress-responsive serine-rich protein 1 (292 aa).

A disordered region spans residues 27–175; that stretch reads SIASLSVGEG…SSDATQVSQA (149 aa). A compositionally biased stretch (basic residues) spans 65-83; sequence STRKSSRGVVRTQRRRRSK. Residues T143 and T233 each carry the phosphothreonine modification.

The chain is Oxidative stress-responsive serine-rich protein 1 (OSER1) from Pongo abelii (Sumatran orangutan).